The chain runs to 554 residues: Probable pectinesterase/pectinesterase inhibitor 6 (554 aa).

Positions 1-32 (MDHKILLTPPKSLYTKCIITIIYVVSISHLNA) are cleaved as a signal peptide. The segment at 29–183 (HLNAHFITSC…TKSISNSLAV (155 aa)) is pectinesterase inhibitor 6. N-linked (GlcNAc...) asparagine glycans are attached at residues asparagine 119 and asparagine 172. The segment at 250–540 (DLVVAKDGSG…FTVENFLDGN (291 aa)) is pectinesterase 6. Residues threonine 327 and glutamine 357 each contribute to the substrate site. Aspartate 380 serves as the catalytic Proton donor; for pectinesterase activity. Cysteine 394 and cysteine 414 form a disulfide bridge. Aspartate 401 functions as the Nucleophile; for pectinesterase activity in the catalytic mechanism. Residues arginine 460 and tryptophan 462 each coordinate substrate.

In the N-terminal section; belongs to the PMEI family. This sequence in the C-terminal section; belongs to the pectinesterase family. Expressed in rosette leaves, flower and siliques.

Its subcellular location is the secreted. It localises to the cell wall. The catalysed reaction is [(1-&gt;4)-alpha-D-galacturonosyl methyl ester](n) + n H2O = [(1-&gt;4)-alpha-D-galacturonosyl](n) + n methanol + n H(+). It participates in glycan metabolism; pectin degradation; 2-dehydro-3-deoxy-D-gluconate from pectin: step 1/5. Its function is as follows. Acts in the modification of cell walls via demethylesterification of cell wall pectin. This chain is Probable pectinesterase/pectinesterase inhibitor 6 (PME6), found in Arabidopsis thaliana (Mouse-ear cress).